Here is a 331-residue protein sequence, read N- to C-terminus: Proline-rich protein 33 (331 aa).

Disordered stretches follow at residues 1 to 112, 128 to 185, and 204 to 247; these read MGPQ…SVPR, SLES…PKVA, and APEP…APAS. Pro residues predominate over residues 94 to 105; that stretch reads PEEPPVPRPPPG. A compositionally biased stretch (low complexity) spans 149-169; the sequence is PPMAGPAAEAERVSSPAWASS. Residues 170–185 are compositionally biased toward pro residues; the sequence is PTPPSGPHPCPVPKVA. Positions 217–238 are enriched in low complexity; sequence EPEVPTPTEQEVPAPTEQEVPA.

This Homo sapiens (Human) protein is Proline-rich protein 33 (PRR33).